A 422-amino-acid chain; its full sequence is Adenylosuccinate synthetase (422 aa).

Residues 11 to 17 and 39 to 41 contribute to the GTP site; these read GDEGKGK and GHT. Asp12 serves as the catalytic Proton acceptor. Mg(2+) is bound by residues Asp12 and Gly39. Residues 12-15, 37-40, Thr129, Arg143, Asn219, Thr234, and Arg298 each bind IMP; these read DEGK and NAGH. The active-site Proton donor is the His40. 294 to 300 provides a ligand contact to substrate; sequence VTTGRKR. GTP contacts are provided by residues Arg300, 326–328, and 411–413; these read KLD and GTG.

It belongs to the adenylosuccinate synthetase family. As to quaternary structure, homodimer. Mg(2+) serves as cofactor.

The protein localises to the cytoplasm. The catalysed reaction is IMP + L-aspartate + GTP = N(6)-(1,2-dicarboxyethyl)-AMP + GDP + phosphate + 2 H(+). It participates in purine metabolism; AMP biosynthesis via de novo pathway; AMP from IMP: step 1/2. Its function is as follows. Plays an important role in the de novo pathway and in the salvage pathway of purine nucleotide biosynthesis. Catalyzes the first committed step in the biosynthesis of AMP from IMP. This Talaromyces marneffei (strain ATCC 18224 / CBS 334.59 / QM 7333) (Penicillium marneffei) protein is Adenylosuccinate synthetase.